Consider the following 209-residue polypeptide: Uridine kinase (209 aa).

12–19 (GGSGGGKT) contacts ATP.

Belongs to the uridine kinase family.

Its subcellular location is the cytoplasm. The enzyme catalyses uridine + ATP = UMP + ADP + H(+). The catalysed reaction is cytidine + ATP = CMP + ADP + H(+). The protein operates within pyrimidine metabolism; CTP biosynthesis via salvage pathway; CTP from cytidine: step 1/3. It participates in pyrimidine metabolism; UMP biosynthesis via salvage pathway; UMP from uridine: step 1/1. The sequence is that of Uridine kinase from Streptococcus agalactiae serotype III (strain NEM316).